A 908-amino-acid polypeptide reads, in one-letter code: Zinc finger and BTB domain-containing protein 41 (908 aa).

A disordered region spans residues 38 to 59 (TQAPERPTPEAAQRCQELPPSP). Positions 89 to 153 (CDLLIIVEGK…LYTSEFFVYK (65 aa)) constitute a BTB domain. The C2H2-type 1 zinc-finger motif lies at 208–231 (HQCKFCSRHFCYKKSLENHLAKTH). The span at 252–261 (RRSKRNRKCP) shows a compositional bias: basic residues. The interval 252–344 (RRSKRNRKCP…EAGDSAGSIH (93 aa)) is disordered. Residues 267–276 (TSDDEQESGD) show a composition bias toward acidic residues. Residues 279 to 296 (DNLHQESSEKERSDRNDS) show a composition bias toward basic and acidic residues. Residues 297–336 (EDPGSEYNAEDEELEEEVSDEDSDTEQSDKDNDAEEEPEA) show a composition bias toward acidic residues. 13 consecutive C2H2-type zinc fingers follow at residues 360-382 (LQCP…TRVH), 388-410 (FECD…RKKH), 421-444 (HKCP…KRFH), 462-484 (WKCD…MILH), 490-513 (FKCT…EKFH), 517-540 (FPCD…ECTH), 546-568 (WTCF…LRIH), 574-596 (HLCS…LRVH), 602-624 (YECD…KKIH), 630-653 (HQCE…KSVH), 667-689 (HQCD…FRTH), 695-717 (YKCQ…LVIH), and 723-746 (FNCQ…DHVH).

The protein localises to the nucleus. Functionally, may be involved in transcriptional regulation. In Mus musculus (Mouse), this protein is Zinc finger and BTB domain-containing protein 41 (Zbtb41).